The following is an 807-amino-acid chain: Phenylalanine--tRNA ligase beta subunit (807 aa).

The tRNA-binding domain occupies Ala39 to Arg156. Positions Pro409–Asn488 constitute a B5 domain. Residues Asp466, Asp472, Glu475, and Glu476 each coordinate Mg(2+). Residues Ser713–Arg806 form the FDX-ACB domain.

This sequence belongs to the phenylalanyl-tRNA synthetase beta subunit family. Type 1 subfamily. In terms of assembly, tetramer of two alpha and two beta subunits. Mg(2+) serves as cofactor.

It localises to the cytoplasm. The enzyme catalyses tRNA(Phe) + L-phenylalanine + ATP = L-phenylalanyl-tRNA(Phe) + AMP + diphosphate + H(+). The protein is Phenylalanine--tRNA ligase beta subunit of Colwellia psychrerythraea (strain 34H / ATCC BAA-681) (Vibrio psychroerythus).